Here is a 347-residue protein sequence, read N- to C-terminus: 3-isopropylmalate dehydrogenase (347 aa).

The substrate site is built by arginine 94, arginine 104, arginine 128, and aspartate 219. Positions 219, 243, and 247 each coordinate Mg(2+). 279–291 (GSAPDIAGQGKAD) contacts NAD(+).

The protein belongs to the isocitrate and isopropylmalate dehydrogenases family. LeuB type 2 subfamily. Homodimer. Mg(2+) is required as a cofactor. The cofactor is Mn(2+).

Its subcellular location is the cytoplasm. It carries out the reaction (2R,3S)-3-isopropylmalate + NAD(+) = 4-methyl-2-oxopentanoate + CO2 + NADH. Its pathway is amino-acid biosynthesis; L-leucine biosynthesis; L-leucine from 3-methyl-2-oxobutanoate: step 3/4. Catalyzes the oxidation of 3-carboxy-2-hydroxy-4-methylpentanoate (3-isopropylmalate) to 3-carboxy-4-methyl-2-oxopentanoate. The product decarboxylates to 4-methyl-2 oxopentanoate. The protein is 3-isopropylmalate dehydrogenase of Streptomyces avermitilis (strain ATCC 31267 / DSM 46492 / JCM 5070 / NBRC 14893 / NCIMB 12804 / NRRL 8165 / MA-4680).